The chain runs to 245 residues: MPTTNIKELLEAGAHFGHQTSRWHPRMKKYIFTKRNGIHIIDLEKTVVMLDKACNYINQVVSEGGKVLFVGTKKQAQEILAEEAKRCGMYFINQRWTGGILTNFHSIQSRIDYLVRLEDQQARGDFNRLPKKEAQKLAEEIARLNRTMGGFKEMTRLPDVIFVVDPTKEKIAMAEAKRMGVPLVAMVDTNCNPDEVDYPIPSNDDAMRAIKLICSKMADSVIEAQNALKVTEVETTGEAQAETAG.

The protein belongs to the universal ribosomal protein uS2 family.

This chain is Small ribosomal subunit protein uS2, found in Dehalococcoides mccartyi (strain ATCC BAA-2266 / KCTC 15142 / 195) (Dehalococcoides ethenogenes (strain 195)).